A 1687-amino-acid polypeptide reads, in one-letter code: Gag-Pol polyprotein (1687 aa).

Gly-2 is lipidated: N-myristoyl glycine; by host. Disordered regions lie at residues 107–126, 136–195, 420–447, and 466–485; these read GQDNGRKSAGGRPSAPSRLP, LLSE…STVA, HKRETEEEKQEREKKETEERERRRDRRQ, and GRQAGNLSNRAMRAPREGRP. The PTAP/PSAP motif motif lies at 108-111; it reads QDNG. The segment covering 139–153 has biased composition (pro residues); sequence EPPPYPTSPPPPPAP. Positions 140–143 match the PPXY motif motif; it reads PPPY. Residues 408–453 are a coiled coil; the sequence is LQDLIKEAEKVYHKRETEEEKQEREKKETEERERRRDRRQEKNLTK. The CCHC-type zinc finger occupies 490–507; it reads DQCAYCKERGHWARECPR. Residues 544 to 614 enclose the Peptidase A2 domain; it reads TEFLVDTGAE…CPAPLLGRDL (71 aa). Asp-549 acts as the Protease; shared with dimeric partner in catalysis. The Reverse transcriptase domain maps to 721–912; that stretch reads LDLGILVPCQ…EEVTYLGYLL (192 aa). Residues Asp-789, Asp-863, Asp-864, Asp-1162, Glu-1200, Asp-1221, and Asp-1291 each contribute to the Mg(2+) site. The 147-residue stretch at 1153 to 1299 folds into the RNase H type-1 domain; the sequence is LPGVPAWYTD…ADEAAKQAAQ (147 aa). Residues 1339–1377 form an HHCC-type zinc finger; that stretch reads HQLTHLGPDKLLQLVGRTSFHIPNLQSVVREITSKCQVC. The 159-residue stretch at 1394–1552 folds into the Integrase catalytic domain; that stretch reads RGDRPGVYWE…TPYEILHGGP (159 aa). Mg(2+)-binding residues include Asp-1405 and Asp-1464.

As to quaternary structure, homohexamer; further associates as homomultimer. The virus core is composed of a lattice formed from hexagonal rings, each containing six capsid monomers. Interacts (via PPXY motif) with host NEDD4. Interacts (via PSAP motif) with host TSG101. In terms of assembly, the reverse transcriptase is a monomer (Potential). Interacts (via RNase domains) with host release factor ETF1; this interaction is essential for translational readthrough of amber codon between viral gag and pol genes, as well as for viral replication. As to quaternary structure, homodimer. The cofactor is Mg(2+). Specific enzymatic cleavages by the viral protease yield mature proteins. The protease is released by autocatalytic cleavage. The polyprotein is cleaved during and after budding, this process is termed maturation. Post-translationally, phosphorylated on serine residues.

Its subcellular location is the virion. It localises to the host cell membrane. The protein resides in the host late endosome membrane. The protein localises to the host endosome. It is found in the host multivesicular body. Its subcellular location is the host cytoplasm. The enzyme catalyses DNA(n) + a 2'-deoxyribonucleoside 5'-triphosphate = DNA(n+1) + diphosphate. The catalysed reaction is Endonucleolytic cleavage to 5'-phosphomonoester.. Protease: Most efficiently inhibited by Amprenavir, which is able to block Gag-Pol processing in infected cells. Plays a role in budding and is processed by the viral protease during virion maturation outside the cell. During budding, it recruits, in a PPXY-dependent or independent manner, Nedd4-like ubiquitin ligases that conjugate ubiquitin molecules to Gag-Pol, or to Gag-Pol binding host factors. Interaction with HECT ubiquitin ligases probably links the viral protein to the host ESCRT pathway and facilitates release. In terms of biological role, targets Gag and gag-pol polyproteins to the plasma membrane via a multipartite membrane binding signal, that includes its myristoylated N-terminus. Also mediates nuclear localization of the pre-integration complex. Functionally, constituent of the pre-integration complex (PIC) which tethers the latter to mitotic chromosomes. This allows the integration of the viral genome into the host DNA. Its function is as follows. Forms the spherical core of the virion that encapsulates the genomic RNA-nucleocapsid complex. Involved in the packaging and encapsidation of two copies of the genome. Binds with high affinity to conserved UCUG elements within the packaging signal, located near the 5'-end of the genome. This binding is dependent on genome dimerization. Acts as a nucleic acid chaperone which is involved in rearrangement of nucleic acid secondary structures during gRNA retrotranscription. In terms of biological role, protease: The aspartyl protease mediates proteolytic cleavages of Gag and Gag-Pol polyproteins during or shortly after the release of the virion from the plasma membrane. Cleavages take place as an ordered, step-wise cascade to yield mature proteins. This process is called maturation. Displays maximal activity during the budding process just prior to particle release from the cell. Functionally, reverse transcriptase/ribonuclease H: RT is a multifunctional enzyme that converts the viral dimeric RNA genome into dsDNA in the cytoplasm, shortly after virus entry into the cell. This enzyme displays a DNA polymerase activity that can copy either DNA or RNA templates, and a ribonuclease H (RNase H) activity that cleaves the RNA strand of RNA-DNA heteroduplexes in a partially processive 3' to 5' endonucleasic mode. Conversion of viral genomic RNA into dsDNA requires many steps. A tRNA binds to the primer-binding site (PBS) situated at the 5' end of the viral RNA. RT uses the 3' end of the tRNA primer to perform a short round of RNA-dependent minus-strand DNA synthesis. The reading proceeds through the U5 region and ends after the repeated (R) region which is present at both ends of viral RNA. The portion of the RNA-DNA heteroduplex is digested by the RNase H, resulting in a ssDNA product attached to the tRNA primer. This ssDNA/tRNA hybridizes with the identical R region situated at the 3' end of viral RNA. This template exchange, known as minus-strand DNA strong stop transfer, can be either intra- or intermolecular. RT uses the 3' end of this newly synthesized short ssDNA to perform the RNA-dependent minus-strand DNA synthesis of the whole template. RNase H digests the RNA template except for a polypurine tract (PPT) situated at the 5' end of the genome. It is not clear if both polymerase and RNase H activities are simultaneous. RNase H probably can proceed both in a polymerase-dependent (RNA cut into small fragments by the same RT performing DNA synthesis) and a polymerase-independent mode (cleavage of remaining RNA fragments by free RTs). Secondly, RT performs DNA-directed plus-strand DNA synthesis using the PPT that has not been removed by RNase H as primers. PPT and tRNA primers are then removed by RNase H. The 3' and 5' ssDNA PBS regions hybridize to form a circular dsDNA intermediate. Strand displacement synthesis by RT to the PBS and PPT ends produces a blunt ended, linear dsDNA copy of the viral genome that includes long terminal repeats (LTRs) at both ends. Its function is as follows. Catalyzes viral DNA integration into the host chromosome, by performing a series of DNA cutting and joining reactions. This enzyme activity takes place after virion entry into a cell and reverse transcription of the RNA genome in dsDNA. The first step in the integration process is 3' processing. This step requires a complex comprising the viral genome, matrix protein and integrase. This complex is called the pre-integration complex (PIC). The integrase protein removes 2 nucleotides from each 3' end of the viral DNA, leaving recessed CA OH's at the 3' ends. In the second step that requires cell division, the PIC enters cell nucleus. In the third step, termed strand transfer, the integrase protein joins the previously processed 3' ends to the 5' ends of strands of target cellular DNA at the site of integration. The last step is viral DNA integration into host chromosome. This is Gag-Pol polyprotein (pro-pol) from Phascolarctos cinereus (Koala).